The chain runs to 310 residues: tRNA-cytidine(32) 2-sulfurtransferase (310 aa).

A PP-loop motif motif is present at residues 45 to 50 (SGGKDS). Residues cysteine 120, cysteine 123, and cysteine 211 each contribute to the [4Fe-4S] cluster site.

It belongs to the TtcA family. As to quaternary structure, homodimer. Mg(2+) serves as cofactor. Requires [4Fe-4S] cluster as cofactor.

It localises to the cytoplasm. The enzyme catalyses cytidine(32) in tRNA + S-sulfanyl-L-cysteinyl-[cysteine desulfurase] + AH2 + ATP = 2-thiocytidine(32) in tRNA + L-cysteinyl-[cysteine desulfurase] + A + AMP + diphosphate + H(+). It functions in the pathway tRNA modification. Functionally, catalyzes the ATP-dependent 2-thiolation of cytidine in position 32 of tRNA, to form 2-thiocytidine (s(2)C32). The sulfur atoms are provided by the cysteine/cysteine desulfurase (IscS) system. This Shewanella baltica (strain OS185) protein is tRNA-cytidine(32) 2-sulfurtransferase.